The primary structure comprises 916 residues: Isoleucine--tRNA ligase (916 aa).

The 'HIGH' region motif lies at 57–67 (PYANGNLHMGH). Glutamate 554 contributes to the L-isoleucyl-5'-AMP binding site. Residues 595 to 599 (KMSKS) carry the 'KMSKS' region motif. Residue lysine 598 participates in ATP binding. Zn(2+) is bound by residues cysteine 885, cysteine 888, cysteine 905, and cysteine 908.

The protein belongs to the class-I aminoacyl-tRNA synthetase family. IleS type 1 subfamily. Monomer. Zn(2+) is required as a cofactor.

The protein resides in the cytoplasm. The catalysed reaction is tRNA(Ile) + L-isoleucine + ATP = L-isoleucyl-tRNA(Ile) + AMP + diphosphate. Functionally, catalyzes the attachment of isoleucine to tRNA(Ile). As IleRS can inadvertently accommodate and process structurally similar amino acids such as valine, to avoid such errors it has two additional distinct tRNA(Ile)-dependent editing activities. One activity is designated as 'pretransfer' editing and involves the hydrolysis of activated Val-AMP. The other activity is designated 'posttransfer' editing and involves deacylation of mischarged Val-tRNA(Ile). This Staphylococcus epidermidis (strain ATCC 12228 / FDA PCI 1200) protein is Isoleucine--tRNA ligase.